Reading from the N-terminus, the 219-residue chain is UPF0619 GPI-anchored membrane protein AFUA_3G00880 (219 aa).

Positions 1–16 are cleaved as a signal peptide; sequence MRFALTLTAFVGSVAA. Asn85 carries an N-linked (GlcNAc...) asparagine glycan. 2 disordered regions span residues 107–144 and 160–205; these read SQQF…GTVS and SSTL…SLTV. The segment covering 114-144 has biased composition (low complexity); sequence SSGSSTTSDSTSSASATGSASTSSSSTGTVS. Asn198 carries GPI-like-anchor amidated asparagine lipidation. The propeptide at 199–219 is removed in mature form; it reads GAGSLTVPAGSLLLGLVALAL.

Belongs to the UPF0619 family. Post-translationally, the GPI-like anchor contains a phosphoceramide lipid group. The anchor position has not been determined.

The protein localises to the cell membrane. The sequence is that of UPF0619 GPI-anchored membrane protein AFUA_3G00880 from Aspergillus fumigatus (strain ATCC MYA-4609 / CBS 101355 / FGSC A1100 / Af293) (Neosartorya fumigata).